Reading from the N-terminus, the 79-residue chain is UPF0180 protein BCE_1513 (79 aa).

This sequence belongs to the UPF0180 family.

In Bacillus cereus (strain ATCC 10987 / NRS 248), this protein is UPF0180 protein BCE_1513.